Consider the following 338-residue polypeptide: Lipoate-protein ligase A (338 aa).

A BPL/LPL catalytic domain is found at 29-216 (PATQRVLFLW…AFFSHYGERV (188 aa)). ATP is bound by residues Arg71, 76–79 (GAVF), and Lys134. A (R)-lipoate-binding site is contributed by Lys134.

The protein belongs to the LplA family. Monomer.

It is found in the cytoplasm. It catalyses the reaction L-lysyl-[lipoyl-carrier protein] + (R)-lipoate + ATP = N(6)-[(R)-lipoyl]-L-lysyl-[lipoyl-carrier protein] + AMP + diphosphate + H(+). Its pathway is protein modification; protein lipoylation via exogenous pathway; protein N(6)-(lipoyl)lysine from lipoate: step 1/2. It functions in the pathway protein modification; protein lipoylation via exogenous pathway; protein N(6)-(lipoyl)lysine from lipoate: step 2/2. Functionally, catalyzes both the ATP-dependent activation of exogenously supplied lipoate to lipoyl-AMP and the transfer of the activated lipoyl onto the lipoyl domains of lipoate-dependent enzymes. The protein is Lipoate-protein ligase A of Klebsiella pneumoniae (strain 342).